A 304-amino-acid chain; its full sequence is Aspartate carbamoyltransferase catalytic subunit (304 aa).

Carbamoyl phosphate-binding residues include Arg49 and Thr50. Position 77 (Lys77) interacts with L-aspartate. Residues Arg99, His127, and Gln130 each contribute to the carbamoyl phosphate site. L-aspartate is bound by residues Arg160 and Arg211. Carbamoyl phosphate contacts are provided by Ala252 and Pro253.

This sequence belongs to the aspartate/ornithine carbamoyltransferase superfamily. ATCase family. As to quaternary structure, heterododecamer (2C3:3R2) of six catalytic PyrB chains organized as two trimers (C3), and six regulatory PyrI chains organized as three dimers (R2).

The enzyme catalyses carbamoyl phosphate + L-aspartate = N-carbamoyl-L-aspartate + phosphate + H(+). Its pathway is pyrimidine metabolism; UMP biosynthesis via de novo pathway; (S)-dihydroorotate from bicarbonate: step 2/3. Catalyzes the condensation of carbamoyl phosphate and aspartate to form carbamoyl aspartate and inorganic phosphate, the committed step in the de novo pyrimidine nucleotide biosynthesis pathway. This is Aspartate carbamoyltransferase catalytic subunit from Bacillus cereus (strain ZK / E33L).